The sequence spans 444 residues: Methylenetetrahydrofolate--tRNA-(uracil-5-)-methyltransferase TrmFO (444 aa).

10–15 is an FAD binding site; sequence GAGLAG.

It belongs to the MnmG family. TrmFO subfamily. It depends on FAD as a cofactor.

It localises to the cytoplasm. The catalysed reaction is uridine(54) in tRNA + (6R)-5,10-methylene-5,6,7,8-tetrahydrofolate + NADH + H(+) = 5-methyluridine(54) in tRNA + (6S)-5,6,7,8-tetrahydrofolate + NAD(+). It carries out the reaction uridine(54) in tRNA + (6R)-5,10-methylene-5,6,7,8-tetrahydrofolate + NADPH + H(+) = 5-methyluridine(54) in tRNA + (6S)-5,6,7,8-tetrahydrofolate + NADP(+). Functionally, catalyzes the folate-dependent formation of 5-methyl-uridine at position 54 (M-5-U54) in all tRNAs. The chain is Methylenetetrahydrofolate--tRNA-(uracil-5-)-methyltransferase TrmFO from Streptococcus mutans serotype c (strain ATCC 700610 / UA159).